The sequence spans 105 residues: Co-chaperonin GroES (105 aa).

Belongs to the GroES chaperonin family. Heptamer of 7 subunits arranged in a ring. Interacts with the chaperonin GroEL.

Its subcellular location is the cytoplasm. Together with the chaperonin GroEL, plays an essential role in assisting protein folding. The GroEL-GroES system forms a nano-cage that allows encapsulation of the non-native substrate proteins and provides a physical environment optimized to promote and accelerate protein folding. GroES binds to the apical surface of the GroEL ring, thereby capping the opening of the GroEL channel. The protein is Co-chaperonin GroES of Parvibaculum lavamentivorans (strain DS-1 / DSM 13023 / NCIMB 13966).